Here is a 582-residue protein sequence, read N- to C-terminus: Formate--tetrahydrofolate ligase (582 aa).

Residue 65–72 participates in ATP binding; sequence TPLGEGKT.

This sequence belongs to the formate--tetrahydrofolate ligase family.

The enzyme catalyses (6S)-5,6,7,8-tetrahydrofolate + formate + ATP = (6R)-10-formyltetrahydrofolate + ADP + phosphate. The protein operates within one-carbon metabolism; tetrahydrofolate interconversion. The chain is Formate--tetrahydrofolate ligase from Vibrio campbellii (strain ATCC BAA-1116).